Reading from the N-terminus, the 104-residue chain is Large ribosomal subunit protein bL21 (104 aa).

It belongs to the bacterial ribosomal protein bL21 family. In terms of assembly, part of the 50S ribosomal subunit. Contacts protein L20.

This protein binds to 23S rRNA in the presence of protein L20. The polypeptide is Large ribosomal subunit protein bL21 (Pseudomonas putida (strain W619)).